We begin with the raw amino-acid sequence, 126 residues long: MLTDPIADMLTRIRNAHLALHKEVSVPRSKIKESIAAILKQEGYIEDVATEEAEIKISLKYFKGKPVISGLKRVSKPGRRVYVGSTDIPKVQNGLGICILSTSSGVLAGTQARDRKVGGELLCEIW.

The protein belongs to the universal ribosomal protein uS8 family. As to quaternary structure, part of the 30S ribosomal subunit. Contacts proteins S5 and S12.

Its function is as follows. One of the primary rRNA binding proteins, it binds directly to 16S rRNA central domain where it helps coordinate assembly of the platform of the 30S subunit. This is Small ribosomal subunit protein uS8 from Nitratidesulfovibrio vulgaris (strain DSM 19637 / Miyazaki F) (Desulfovibrio vulgaris).